Reading from the N-terminus, the 356-residue chain is UDP-N-acetylglucosamine--N-acetylmuramyl-(pentapeptide) pyrophosphoryl-undecaprenol N-acetylglucosamine transferase (356 aa).

UDP-N-acetyl-alpha-D-glucosamine is bound by residues 15-17, N127, R163, S191, I244, 263-268, and Q288; these read TGG and ALTVSE.

This sequence belongs to the glycosyltransferase 28 family. MurG subfamily.

It localises to the cell inner membrane. The catalysed reaction is di-trans,octa-cis-undecaprenyl diphospho-N-acetyl-alpha-D-muramoyl-L-alanyl-D-glutamyl-meso-2,6-diaminopimeloyl-D-alanyl-D-alanine + UDP-N-acetyl-alpha-D-glucosamine = di-trans,octa-cis-undecaprenyl diphospho-[N-acetyl-alpha-D-glucosaminyl-(1-&gt;4)]-N-acetyl-alpha-D-muramoyl-L-alanyl-D-glutamyl-meso-2,6-diaminopimeloyl-D-alanyl-D-alanine + UDP + H(+). Its pathway is cell wall biogenesis; peptidoglycan biosynthesis. Its function is as follows. Cell wall formation. Catalyzes the transfer of a GlcNAc subunit on undecaprenyl-pyrophosphoryl-MurNAc-pentapeptide (lipid intermediate I) to form undecaprenyl-pyrophosphoryl-MurNAc-(pentapeptide)GlcNAc (lipid intermediate II). The sequence is that of UDP-N-acetylglucosamine--N-acetylmuramyl-(pentapeptide) pyrophosphoryl-undecaprenol N-acetylglucosamine transferase from Klebsiella pneumoniae subsp. pneumoniae (strain ATCC 700721 / MGH 78578).